The primary structure comprises 434 residues: Trigger factor (434 aa).

The PPIase FKBP-type domain occupies 162–247 (GDKINISLIA…FNTVEQAKLP (86 aa)).

It belongs to the FKBP-type PPIase family. Tig subfamily.

It localises to the cytoplasm. It catalyses the reaction [protein]-peptidylproline (omega=180) = [protein]-peptidylproline (omega=0). Functionally, involved in protein export. Acts as a chaperone by maintaining the newly synthesized protein in an open conformation. Functions as a peptidyl-prolyl cis-trans isomerase. This chain is Trigger factor, found in Methylobacillus flagellatus (strain ATCC 51484 / DSM 6875 / VKM B-1610 / KT).